Reading from the N-terminus, the 195-residue chain is Thioredoxin reductase-like selenoprotein T (195 aa).

An N-terminal signal peptide occupies residues M1–A19. Residues C46–U49 constitute a cross-link (cysteinyl-selenocysteine (Cys-Sec)). Position 49 (U49) is a non-standard amino acid, selenocysteine. A helical membrane pass occupies residues I85–G103.

Belongs to the SelWTH family. Selenoprotein T subfamily. Post-translationally, may contain a selenide-sulfide bond between Cys-46 and Sec-49. This bond is speculated to serve as redox-active pair.

It is found in the endoplasmic reticulum membrane. The enzyme catalyses [thioredoxin]-dithiol + NADP(+) = [thioredoxin]-disulfide + NADPH + H(+). Its function is as follows. Selenoprotein with thioredoxin reductase-like oxidoreductase activity. Protects dopaminergic neurons against oxidative stress and cell death. Involved in ADCYAP1/PACAP-induced calcium mobilization and neuroendocrine secretion. Plays a role in fibroblast anchorage and redox regulation. In gastric smooth muscle, modulates the contraction processes through the regulation of calcium release and MYLK activation. In pancreatic islets, involved in the control of glucose homeostasis, contributes to prolonged ADCYAP1/PACAP-induced insulin secretion. The sequence is that of Thioredoxin reductase-like selenoprotein T from Bos taurus (Bovine).